The primary structure comprises 1771 residues: Replicase polyprotein (1771 aa).

Positions 1 to 29 (MSFQQTNNNATNNINSLEELAAQELIAAQ) form a coiled coil. The segment at 16 to 25 (SLEELAAQEL) is BC-box. The interval 106–114 (PEHRYGSTF) is interaction with and inhibition of host AGO2. In terms of domain architecture, SF3 helicase spans 482 to 656 (AKSLYEQVLL…QEKSIWVRNA (175 aa)). Position 510 to 517 (510 to 517 (GESGIGKT)) interacts with ATP. The interval 919 to 942 (VEVGSSGDSKTQKQRNTKVEVGKE) is disordered. The 248-residue stretch at 954-1201 (DPAAHALVLD…YACPLTQEAI (248 aa)) folds into the Peptidase C3 domain. Residues H1003, D1063, and C1162 each act as for picornain 3C-like protease activity in the active site. Residues 1385–1413 (GEQYDFTSQRAQELRRDVEELIDNCAKGI) adopt a coiled-coil conformation. The region spanning 1495–1634 (NKVIAGDFGN…NISDRVVEWF (140 aa)) is the RdRp catalytic domain.

Interacts with host AGO2; this interaction leads to AGO2 degradation via an E3 ubiquitin ligase-dependent pathway and may block the RNA-induced silencing complexes (RISC) activity. Post-translationally, might be expressed through a ribosomal skip from one codon to the next without formation of a peptide bond.

It localises to the host cytoplasm. The protein resides in the host perinuclear region. The enzyme catalyses RNA(n) + a ribonucleoside 5'-triphosphate = RNA(n+1) + diphosphate. Functionally, suppressor of RNA-mediated gene silencing, an antiviral defense mechanism of insect cells. Inhibits siRNA function through the direct enzymatic inactivation of host AGO2, but does not interfere with miRNA pathway. Facilitates viral replication via the recruitment of a cellular ubiquitin ligase complex that promotes host AGO2 degradation. Inhibits the integrated stress response (ISR) in the infected cell possiby by degrading host Nup358. Stress granule formation is thus inhibited, which allows protein synthesis and viral replication. Does not bind to dsRNA or siRNA. Replicates the genomic and antigenomic RNA. The sequence is that of Replicase polyprotein from Teleogryllus oceanicus (black field cricket).